Here is a 312-residue protein sequence, read N- to C-terminus: Acetyl-coenzyme A carboxylase carboxyl transferase subunit alpha (312 aa).

The 251-residue stretch at 36-286 (RLDKEVKSIY…KEYFLDALRT (251 aa)) folds into the CoA carboxyltransferase C-terminal domain.

This sequence belongs to the AccA family. As to quaternary structure, acetyl-CoA carboxylase is a heterohexamer composed of biotin carboxyl carrier protein (AccB), biotin carboxylase (AccC) and two subunits each of ACCase subunit alpha (AccA) and ACCase subunit beta (AccD).

The protein localises to the cytoplasm. The catalysed reaction is N(6)-carboxybiotinyl-L-lysyl-[protein] + acetyl-CoA = N(6)-biotinyl-L-lysyl-[protein] + malonyl-CoA. Its pathway is lipid metabolism; malonyl-CoA biosynthesis; malonyl-CoA from acetyl-CoA: step 1/1. Functionally, component of the acetyl coenzyme A carboxylase (ACC) complex. First, biotin carboxylase catalyzes the carboxylation of biotin on its carrier protein (BCCP) and then the CO(2) group is transferred by the carboxyltransferase to acetyl-CoA to form malonyl-CoA. The protein is Acetyl-coenzyme A carboxylase carboxyl transferase subunit alpha of Helicobacter pylori (strain Shi470).